A 418-amino-acid polypeptide reads, in one-letter code: tRNA(Met) cytidine acetate ligase (418 aa).

ATP-binding residues include Gly95, Asn161, and Arg186.

This sequence belongs to the TmcAL family.

Its subcellular location is the cytoplasm. It catalyses the reaction cytidine(34) in elongator tRNA(Met) + acetate + ATP = N(4)-acetylcytidine(34) in elongator tRNA(Met) + AMP + diphosphate. Catalyzes the formation of N(4)-acetylcytidine (ac(4)C) at the wobble position of elongator tRNA(Met), using acetate and ATP as substrates. First activates an acetate ion to form acetyladenylate (Ac-AMP) and then transfers the acetyl group to tRNA to form ac(4)C34. This chain is tRNA(Met) cytidine acetate ligase, found in Thermotoga petrophila (strain ATCC BAA-488 / DSM 13995 / JCM 10881 / RKU-1).